The following is a 258-amino-acid chain: Spindlin-2B (258 aa).

A compositionally biased stretch (low complexity) spans 1–23 (MKTPNAQEAEGQQTRAAAGRATG). The segment at 1–49 (MKTPNAQEAEGQQTRAAAGRATGSANMTKKKVSQKKQRGRPSSQPRRNI) is disordered. Positions 28–39 (TKKKVSQKKQRG) are enriched in basic residues. 3 tudor-like domain regions span residues 50-99 (VGCR…LELH), 129-178 (IGKA…YQLL), and 210-255 (IGKH…YDLV). 2 histone H3K4me3 and H3R8me2a binding regions span residues E138 and 246 to 248 (DFH).

The protein belongs to the SPIN/STSY family. Interacts with C11orf84/SPINDOC. Detected in all the examined tissues with highest expression in liver, followed by heart, stomach, kidney, skeletal muscle, placenta, and pancreas.

It is found in the nucleus. In terms of biological role, involved in the regulation of cell cycle progression, this activity is related to the inhibition of apoptosis following the removal of essential growth factors. Exhibits H3K4me3-binding activity. In Homo sapiens (Human), this protein is Spindlin-2B (SPIN2B).